The chain runs to 220 residues: Large ribosomal subunit protein bL25 (220 aa).

Over residues 186–199 (ELEDEDEDEDEVAA) the composition is skewed to acidic residues. The disordered stretch occupies residues 186-220 (ELEDEDEDEDEVAADEVPATEVDDQAAVKEGEGKE). Positions 211 to 220 (AAVKEGEGKE) are enriched in basic and acidic residues.

This sequence belongs to the bacterial ribosomal protein bL25 family. CTC subfamily. Part of the 50S ribosomal subunit; part of the 5S rRNA/L5/L18/L25 subcomplex. Contacts the 5S rRNA. Binds to the 5S rRNA independently of L5 and L18.

Functionally, this is one of the proteins that binds to the 5S RNA in the ribosome where it forms part of the central protuberance. The polypeptide is Large ribosomal subunit protein bL25 (Christiangramia forsetii (strain DSM 17595 / CGMCC 1.15422 / KT0803) (Gramella forsetii)).